The primary structure comprises 89 residues: Small ribosomal subunit protein uS15 (89 aa).

This sequence belongs to the universal ribosomal protein uS15 family. Part of the 30S ribosomal subunit. Forms a bridge to the 50S subunit in the 70S ribosome, contacting the 23S rRNA.

In terms of biological role, one of the primary rRNA binding proteins, it binds directly to 16S rRNA where it helps nucleate assembly of the platform of the 30S subunit by binding and bridging several RNA helices of the 16S rRNA. Forms an intersubunit bridge (bridge B4) with the 23S rRNA of the 50S subunit in the ribosome. This chain is Small ribosomal subunit protein uS15, found in Corynebacterium glutamicum (strain R).